The chain runs to 379 residues: Cobalt-precorrin-5B C(1)-methyltransferase (379 aa).

Belongs to the CbiD family.

The catalysed reaction is Co-precorrin-5B + S-adenosyl-L-methionine = Co-precorrin-6A + S-adenosyl-L-homocysteine. It participates in cofactor biosynthesis; adenosylcobalamin biosynthesis; cob(II)yrinate a,c-diamide from sirohydrochlorin (anaerobic route): step 6/10. In terms of biological role, catalyzes the methylation of C-1 in cobalt-precorrin-5B to form cobalt-precorrin-6A. The chain is Cobalt-precorrin-5B C(1)-methyltransferase from Cyanothece sp. (strain PCC 7425 / ATCC 29141).